The primary structure comprises 405 residues: Cytoplasmic tRNA 2-thiolation protein 2 (405 aa).

It belongs to the CTU2/NCS2 family.

The protein localises to the cytoplasm. Its pathway is tRNA modification; 5-methoxycarbonylmethyl-2-thiouridine-tRNA biosynthesis. Functionally, plays a central role in 2-thiolation of mcm(5)S(2)U at tRNA wobble positions of tRNA(Lys), tRNA(Glu) and tRNA(Gln). May act by forming a heterodimer with NCS6/CTU1 that ligates sulfur from thiocarboxylated URM1 onto the uridine of tRNAs at wobble position. In Drosophila pseudoobscura pseudoobscura (Fruit fly), this protein is Cytoplasmic tRNA 2-thiolation protein 2.